We begin with the raw amino-acid sequence, 141 residues long: MARFSIVFAAAGVLLLVAMAPVSEASTTTIITTIIEENPYGRGRTESGCYQQMEEAEMLNHCGMYLMKNLGERSQVSPRMREEDHKQLCCMQLKNLDEKCMCPAIMMMLNEPMWIRMRDQVMSMAHNLPIECNLMSQPCQM.

Residues Met-1 to Ala-25 form the signal peptide. The propeptide occupies Ser-26–Asn-38. Disulfide bonds link Cys-49-Cys-100, Cys-62-Cys-89, Cys-90-Cys-132, and Cys-102-Cys-139.

Belongs to the 2S seed storage albumins family. Heterodimer; disulfide-linked.

This is a 2S seed storage protein. This is Albumin-8 from Helianthus annuus (Common sunflower).